Reading from the N-terminus, the 129-residue chain is MSHDPTPISDNPAEFTLDPVIAARLKLNDAGLIPAVVQAVDTREVLMMAWMDTHALAYTLATRRGTYYSRSRDEYWIKGLTSGNVQEVTDVALDCDGDTVLVTVHQTGGACHTGARTCFDADPLLGPGQ.

Mg(2+) is bound at residue aspartate 94. Cysteine 95 is a binding site for Zn(2+). 2 residues coordinate Mg(2+): aspartate 96 and aspartate 98. Cysteine 111 and cysteine 118 together coordinate Zn(2+).

Belongs to the PRA-CH family. As to quaternary structure, homodimer. The cofactor is Mg(2+). It depends on Zn(2+) as a cofactor.

The protein localises to the cytoplasm. It carries out the reaction 1-(5-phospho-beta-D-ribosyl)-5'-AMP + H2O = 1-(5-phospho-beta-D-ribosyl)-5-[(5-phospho-beta-D-ribosylamino)methylideneamino]imidazole-4-carboxamide. Its pathway is amino-acid biosynthesis; L-histidine biosynthesis; L-histidine from 5-phospho-alpha-D-ribose 1-diphosphate: step 3/9. Functionally, catalyzes the hydrolysis of the adenine ring of phosphoribosyl-AMP. This Corynebacterium efficiens (strain DSM 44549 / YS-314 / AJ 12310 / JCM 11189 / NBRC 100395) protein is Phosphoribosyl-AMP cyclohydrolase.